The following is a 687-amino-acid chain: FAD-dependent oxidoreductase domain-containing protein 2 (687 aa).

The first 22 residues, 1-22 (MSVIQLVFRLLCVLDLLLAVSA), serve as a signal peptide directing secretion. N-linked (GlcNAc...) asparagine glycans are attached at residues N29 and N305.

This sequence belongs to the FOXRED2 family. The cofactor is FAD. Post-translationally, N-glycosylated.

The protein localises to the endoplasmic reticulum lumen. Functionally, probable flavoprotein which may function in endoplasmic reticulum associated degradation (ERAD). May bind non-native proteins in the endoplasmic reticulum and target them to the ubiquitination machinery for subsequent degradation. The chain is FAD-dependent oxidoreductase domain-containing protein 2 (foxred2) from Danio rerio (Zebrafish).